The chain runs to 264 residues: Teichoic acids export ATP-binding protein TagH (264 aa).

The 222-residue stretch at 22-243 (ERLKDVIVPF…YEKFLNDFKK (222 aa)) folds into the ABC transporter domain. An ATP-binding site is contributed by 57–64 (GINGSGKS).

The protein belongs to the ABC transporter superfamily. Teichoic acids exporter (TC 3.A.1.104.1) family. As to quaternary structure, the complex is composed of two ATP-binding proteins (TagH) and two transmembrane proteins (TagG).

It is found in the cell membrane. The catalysed reaction is ATP + H2O + teichoic acidSide 1 = ADP + phosphate + teichoic acidSide 2.. Part of the ABC transporter complex TagGH involved in teichoic acids export. Responsible for energy coupling to the transport system. The protein is Teichoic acids export ATP-binding protein TagH of Staphylococcus saprophyticus subsp. saprophyticus (strain ATCC 15305 / DSM 20229 / NCIMB 8711 / NCTC 7292 / S-41).